Reading from the N-terminus, the 105-residue chain is uncharacterized protein (105 aa).

This is an uncharacterized protein from Microplitis demolitor (Parasitoid wasp).